The sequence spans 386 residues: Protein RETICULATA-RELATED 4, chloroplastic (386 aa).

The N-terminal 61 residues, 1-61 (MAIASCFFCV…RRVPITPVLS (61 aa)), are a transit peptide targeting the chloroplast. The tract at residues 61-99 (SASSGNGGSDNNGGGLSGGGGGGDGGKNDGDGHGDEDRD) is disordered. The segment covering 65–85 (GNGGSDNNGGGLSGGGGGGDG) has biased composition (gly residues). The span at 86 to 99 (GKNDGDGHGDEDRD) shows a compositional bias: basic and acidic residues. Transmembrane regions (helical) follow at residues 201–221 (VVFA…YLPA) and 273–293 (KLFA…NAFI).

It belongs to the RETICULATA family.

The protein resides in the plastid. It is found in the chloroplast membrane. May play a role in leaf development. In Arabidopsis thaliana (Mouse-ear cress), this protein is Protein RETICULATA-RELATED 4, chloroplastic.